A 798-amino-acid polypeptide reads, in one-letter code: Integrin beta-1-B (798 aa).

A signal peptide spans 1–21 (MARYPVFTFVFLICLVLCTNA). Over 22-727 (QQGGTECLKA…VKEPECPSGP (706 aa)) the chain is Extracellular. One can recognise a PSI domain in the interval 27–77 (ECLKANAKSCGECIQAGPNCGWCTKVDFLQEGEPTSARCDDLAALKTKGCP). Disulfide bonds link C28-C46, C36-C464, C39-C65, C49-C76, C206-C212, C260-C300, C400-C414, C434-C462, C466-C486, C477-C489, C491-C500, C502-C533, C516-C531, C525-C536, C538-C553, C555-C576, C560-C574, C568-C579, C581-C590, C592-C615, C599-C613, C607-C618, C620-C630, C633-C636, C640-C691, C646-C665, C649-C661, and C699-C723. Positions 77 to 106 (PEDDIQNPRGRKQKLKDIPITSKGKGERMD) are disordered. 2 N-linked (GlcNAc...) asparagine glycosylation sites follow: N109 and N131. Positions 139–377 (DYPIDLYYLM…QLIIDSYNSL (239 aa)) constitute a VWFA domain. S151 and S153 together coordinate Mg(2+). The Ca(2+) site is built by S153, D156, D157, and E188. 2 N-linked (GlcNAc...) asparagine glycosylation sites follow: N211 and N223. The Ca(2+) site is built by N243, D245, P247, and E248. A Mg(2+)-binding site is contributed by E248. N-linked (GlcNAc...) asparagine glycans are attached at residues N268 and N362. N416 carries an N-linked (GlcNAc...) asparagine glycan. I-EGF domains are found at residues 466 to 501 (CQDK…KECE), 502 to 554 (CSTD…KYCE), 555 to 591 (CDNF…SACD), and 592 to 631 (CSED…PTCE). N-linked (GlcNAc...) asparagine glycosylation is present at N481. An N-linked (GlcNAc...) asparagine glycan is attached at N520. N584 is a glycosylation site (N-linked (GlcNAc...) asparagine). A glycan (N-linked (GlcNAc...) asparagine) is linked at N669. The chain crosses the membrane as a helical span at residues 728–751 (DIIPIVAGVVAGIVLIGLALLLIW). Over 752–798 (KLLMIIHDRREFAKFEKEKMNAKWDTGENPIYKSAVATVVNPKYEGK) the chain is Cytoplasmic. At Y783 the chain carries Phosphotyrosine.

It belongs to the integrin beta chain family. In terms of assembly, heterodimer of an alpha and a beta subunit.

It is found in the cell membrane. The protein resides in the cell projection. It localises to the invadopodium membrane. Its subcellular location is the ruffle membrane. The protein localises to the melanosome. It is found in the cleavage furrow. The protein resides in the lamellipodium. It localises to the ruffle. Functionally, beta integrins associate with alpha subunits to form receptor complexes that recognize the sequence R-G-D in a wide array of ligands. May be involved in osteoblast compaction. May play role in myoblast differentiation and fusion during skeletal myogenesis. This Xenopus laevis (African clawed frog) protein is Integrin beta-1-B (itgb1-b).